Consider the following 578-residue polypeptide: A-type ATP synthase subunit A (578 aa).

Residue 228–235 participates in ATP binding; that stretch reads GPFGSGKT.

The protein belongs to the ATPase alpha/beta chains family. Has multiple subunits with at least A(3), B(3), C, D, E, F, H, I and proteolipid K(x).

The protein resides in the cell membrane. The catalysed reaction is ATP + H2O + 4 H(+)(in) = ADP + phosphate + 5 H(+)(out). Component of the A-type ATP synthase that produces ATP from ADP in the presence of a proton gradient across the membrane. The A chain is the catalytic subunit. The protein is A-type ATP synthase subunit A of Methanosarcina acetivorans (strain ATCC 35395 / DSM 2834 / JCM 12185 / C2A).